The chain runs to 90 residues: Small ribosomal subunit protein bS16 (90 aa).

Belongs to the bacterial ribosomal protein bS16 family.

The sequence is that of Small ribosomal subunit protein bS16 from Streptococcus sanguinis (strain SK36).